Here is a 528-residue protein sequence, read N- to C-terminus: Esterase PE16 (528 aa).

A PE domain is found at 1-93 (MSFVFAVPEM…AGWYVDAEAA (93 aa)). A linker region spans residues 94–143 (NAALVDTAATGASELGSGGRTALILGSTGTPRPPFDYMQQVYDRYIAPHY). Positions 149-369 (SGLYTPAQFQ…LRAIIELGYD (221 aa)) constitute a PE-PPE domain. The active site involves serine 199. A helical transmembrane segment spans residues 503-523 (IALLVFAAGIPAVAAVAILTG).

The protein belongs to the mycobacterial PE family.

It is found in the membrane. The enzyme catalyses a hexanoate ester + H2O = an aliphatic alcohol + hexanoate + H(+). It catalyses the reaction an octanoate ester + H2O = an aliphatic alcohol + octanoate + H(+). It carries out the reaction a butanoate ester + H2O = an aliphatic alcohol + butanoate + H(+). Esterase activity is significantly inhibited by the serine modifier phenylmethylsulfonyl fluoride (PMSF). Esterase that hydrolyzes short to medium chain fatty acid esters with the highest specific activity for p-nitrophenyl caproate (pNPC6). Has lower activity with p-nitrophenyl caprylate (pNPC8) and p-nitrophenyl butyrate (pNPC4). Has weak activity with p-nitrophenyl caprate (pNPC10) and p-nitrophenyl laurate (pNPC12). Does not possess lipolytic activity and cutinase activity. The polypeptide is Esterase PE16 (Mycobacterium tuberculosis (strain ATCC 25618 / H37Rv)).